The sequence spans 60 residues: Large ribosomal subunit protein uL30 (60 aa).

This sequence belongs to the universal ribosomal protein uL30 family. In terms of assembly, part of the 50S ribosomal subunit.

The sequence is that of Large ribosomal subunit protein uL30 from Shewanella baltica (strain OS223).